Consider the following 267-residue polypeptide: NLP effector protein 6 (267 aa).

A signal peptide spans 1-35; it reads MRTTSPYSHCSHVEMNAGAFVTMLLVALSVCVAAA. An N-linked (GlcNAc...) asparagine glycan is attached at N114. Positions 117–127 match the Conserved undecapeptide motif motif; sequence AIMYAWYFPKR. The short motif at 134–140 is the Conserved heptapeptide motif element; it reads IQRHDWK. Residue N192 is glycosylated (N-linked (GlcNAc...) asparagine).

The protein belongs to the Necrosis inducing protein (NPP1) family.

Its subcellular location is the secreted. Its function is as follows. Probable secreted effector that may act as a pathogen-associated molecular pattern (PAMP) recognized by the plant immune system. This is NLP effector protein 6 from Plasmopara viticola (Downy mildew of grapevine).